Consider the following 103-residue polypeptide: Large ribosomal subunit protein uL24 (103 aa).

Belongs to the universal ribosomal protein uL24 family. In terms of assembly, part of the 50S ribosomal subunit.

Its function is as follows. One of two assembly initiator proteins, it binds directly to the 5'-end of the 23S rRNA, where it nucleates assembly of the 50S subunit. Functionally, one of the proteins that surrounds the polypeptide exit tunnel on the outside of the subunit. This is Large ribosomal subunit protein uL24 from Rhizobium meliloti (strain 1021) (Ensifer meliloti).